A 447-amino-acid polypeptide reads, in one-letter code: Putative branched-chain amino acid carrier protein SAUSA300_1300 (447 aa).

12 helical membrane-spanning segments follow: residues 6 to 26, 40 to 60, 74 to 94, 114 to 134, 143 to 163, 193 to 213, 229 to 249, 290 to 310, 326 to 346, 350 to 370, 382 to 402, and 417 to 437; these read WVIG…IFPP, ILAF…VGAL, PKFS…LFAI, SSIA…YICL, IGSL…IKGY, GYLT…VNAV, LTAG…LGYI, LLGI…IVAV, FVLV…NAVI, IPVL…ILIA, IPVI…LGWL, and LEWF…GIFV.

It belongs to the branched chain amino acid transporter family.

The protein resides in the cell membrane. In terms of biological role, component of the transport system for branched-chain amino acids (leucine, isoleucine and valine), which is coupled to a proton motive force (Potential). Contributes to NaCl tolerance. This chain is Putative branched-chain amino acid carrier protein SAUSA300_1300, found in Staphylococcus aureus (strain USA300).